The following is a 365-amino-acid chain: S-adenosylmethionine:tRNA ribosyltransferase-isomerase (365 aa).

It belongs to the QueA family. Monomer.

Its subcellular location is the cytoplasm. The enzyme catalyses 7-aminomethyl-7-carbaguanosine(34) in tRNA + S-adenosyl-L-methionine = epoxyqueuosine(34) in tRNA + adenine + L-methionine + 2 H(+). The protein operates within tRNA modification; tRNA-queuosine biosynthesis. Its function is as follows. Transfers and isomerizes the ribose moiety from AdoMet to the 7-aminomethyl group of 7-deazaguanine (preQ1-tRNA) to give epoxyqueuosine (oQ-tRNA). This chain is S-adenosylmethionine:tRNA ribosyltransferase-isomerase, found in Rickettsia peacockii (strain Rustic).